A 542-amino-acid polypeptide reads, in one-letter code: Probable quinate permease (542 aa).

Over 1–22 the chain is Cytoplasmic; sequence MSILALVEDRPTPKEVYNWRIY. A helical transmembrane segment spans residues 23–43; it reads LLAAVASFTSCMIGYDSAFIG. Topologically, residues 44–66 are extracellular; that stretch reads TTLALSSFREEFGFNTMSKTAVN. A helical membrane pass occupies residues 67–87; it reads LVSANIVSCYQAGAFFGAFLA. Residues 88–97 are Cytoplasmic-facing; sequence YPVGHFWGRK. The chain crosses the membrane as a helical span at residues 98-118; it reads WGLLFSGAIFTLGAGLMLGAD. The Extracellular segment spans residues 119-130; sequence GDRGLGLLYGGR. Residues 131–151 form a helical membrane-spanning segment; the sequence is VLAGLGVGAGSNITPIYISEM. Residues 152-159 lie on the Cytoplasmic side of the membrane; it reads APPSIRGR. Residues 160–180 traverse the membrane as a helical segment; that stretch reads LVGVYELGWQIGGLVGFWINY. The Extracellular segment spans residues 181-193; the sequence is GVSETLAPSHKQW. Residues 194-214 traverse the membrane as a helical segment; the sequence is IIPFAVQLIPSGLLLIGAVFL. Topologically, residues 215–285 are cytoplasmic; that stretch reads KESPRWLFSR…AGTNKKVMYR (71 aa). A helical membrane pass occupies residues 286–306; that stretch reads LFLGSMLFFWQNGSGINAINY. At 307-325 the chain is on the extracellular side; the sequence is YSPTVFKSIGLQGANTSMF. A helical membrane pass occupies residues 326–346; the sequence is STGIFGVVKTVVTFVWLLYLI. At 347-352 the chain is on the cytoplasmic side; the sequence is DRLGRR. Residues 353-373 form a helical membrane-spanning segment; it reads LLLLIGAAGASVCLFIVGAYI. At 374–387 the chain is on the extracellular side; it reads KIADPASNPTQEMT. A helical transmembrane segment spans residues 388–408; sequence GGGIAAMFFFYLYTVFYTPSW. Over 409–456 the chain is Cytoplasmic; the sequence is NGTPWVMNSEMFEPNMRSLAQACAAASNWFWNFLISRFTPQMFAKMEY. A helical membrane pass occupies residues 457–477; that stretch reads GVWFFFASLMVLSIVFVFFLL. Topologically, residues 478-542 are extracellular; the sequence is PETKGIPLES…EHLSEDLPKV (65 aa). Residues 519-542 are disordered; sequence IEESGYSKTGDQQVEHLSEDLPKV. Basic and acidic residues predominate over residues 531–542; sequence QVEHLSEDLPKV.

This sequence belongs to the major facilitator superfamily. Sugar transporter (TC 2.A.1.1) family. In terms of assembly, interacts with creB. In terms of processing, ubiquitinated. Deubiquitinated by creB, probably to control its activity or amount.

The protein localises to the cell membrane. Functionally, integral membrane transporter that imports quinic acid to be catabolized as a carbon source. This Neosartorya fischeri (strain ATCC 1020 / DSM 3700 / CBS 544.65 / FGSC A1164 / JCM 1740 / NRRL 181 / WB 181) (Aspergillus fischerianus) protein is Probable quinate permease (qutD).